Here is a 490-residue protein sequence, read N- to C-terminus: Cytochrome P450 2C7 (490 aa).

Residue R144 is modified to Dimethylated arginine. C435 is a heme binding site.

This sequence belongs to the cytochrome P450 family. Heme is required as a cofactor.

The protein resides in the endoplasmic reticulum membrane. It is found in the microsome membrane. The enzyme catalyses an organic molecule + reduced [NADPH--hemoprotein reductase] + O2 = an alcohol + oxidized [NADPH--hemoprotein reductase] + H2O + H(+). Cytochromes P450 are a group of heme-thiolate monooxygenases. In liver microsomes, this enzyme is involved in an NADPH-dependent electron transport pathway. It oxidizes a variety of structurally unrelated compounds, including steroids, fatty acids, and xenobiotics. In Rattus norvegicus (Rat), this protein is Cytochrome P450 2C7 (Cyp2c7).